The following is a 539-amino-acid chain: CTP synthase (539 aa).

The segment at 1 to 268 (MSFKCIFLTG…STFITEKLGL (268 aa)) is amidoligase domain. Ser14 contributes to the CTP binding site. Ser14 contributes to the UTP binding site. ATP is bound at residue 15 to 20 (SLGKGL). Position 55 (Tyr55) interacts with L-glutamine. Asp72 contributes to the ATP binding site. The Mg(2+) site is built by Asp72 and Glu142. Residues 149-151 (DIE), 188-193 (KTKPTQ), and Lys224 contribute to the CTP site. UTP contacts are provided by residues 188 to 193 (KTKPTQ) and Lys224. One can recognise a Glutamine amidotransferase type-1 domain in the interval 294–533 (RIGLVGKYVQ…IQAAILYSRN (240 aa)). Gly353 contacts L-glutamine. Cys380 functions as the Nucleophile; for glutamine hydrolysis in the catalytic mechanism. Residues 381–384 (LGMQ), Glu404, and Arg461 each bind L-glutamine. Catalysis depends on residues His506 and Glu508.

This sequence belongs to the CTP synthase family. As to quaternary structure, homotetramer.

It carries out the reaction UTP + L-glutamine + ATP + H2O = CTP + L-glutamate + ADP + phosphate + 2 H(+). It catalyses the reaction L-glutamine + H2O = L-glutamate + NH4(+). The enzyme catalyses UTP + NH4(+) + ATP = CTP + ADP + phosphate + 2 H(+). It functions in the pathway pyrimidine metabolism; CTP biosynthesis via de novo pathway; CTP from UDP: step 2/2. Its activity is regulated as follows. Allosterically activated by GTP, when glutamine is the substrate; GTP has no effect on the reaction when ammonia is the substrate. The allosteric effector GTP functions by stabilizing the protein conformation that binds the tetrahedral intermediate(s) formed during glutamine hydrolysis. Inhibited by the product CTP, via allosteric rather than competitive inhibition. Its function is as follows. Catalyzes the ATP-dependent amination of UTP to CTP with either L-glutamine or ammonia as the source of nitrogen. Regulates intracellular CTP levels through interactions with the four ribonucleotide triphosphates. This Chlamydia felis (strain Fe/C-56) (Chlamydophila felis) protein is CTP synthase.